A 152-amino-acid chain; its full sequence is Large ribosomal subunit protein uL22 (152 aa).

Residues 124–143 (APTKAASKKAAPAKQTTPAA) show a composition bias toward low complexity. Residues 124 to 152 (APTKAASKKAAPAKQTTPAATESKTEGAE) are disordered.

The protein belongs to the universal ribosomal protein uL22 family. In terms of assembly, part of the 50S ribosomal subunit.

Functionally, this protein binds specifically to 23S rRNA; its binding is stimulated by other ribosomal proteins, e.g. L4, L17, and L20. It is important during the early stages of 50S assembly. It makes multiple contacts with different domains of the 23S rRNA in the assembled 50S subunit and ribosome. The globular domain of the protein is located near the polypeptide exit tunnel on the outside of the subunit, while an extended beta-hairpin is found that lines the wall of the exit tunnel in the center of the 70S ribosome. This chain is Large ribosomal subunit protein uL22, found in Salinispora arenicola (strain CNS-205).